The sequence spans 141 residues: Ubiquitin-like protein ATG12 (141 aa).

The tract at residues 1–53 is disordered; that stretch reads MSEDSEVVLQLPSAPVGAGGESLPELSPETATPEPPSSAAVSPGTEEPPGDTK. Residues 23–40 are compositionally biased toward low complexity; it reads LPELSPETATPEPPSSAA. Gly141 participates in a covalent cross-link: Glycyl lysine isopeptide (Gly-Lys) (interchain with K-? in acceptor protein).

The protein belongs to the ATG12 family. Forms a conjugate with ATG5. Part of the minor complex composed of 4 sets of ATG12-ATG5 and ATG16L1 (400 kDa); this complex interacts with ATG3 leading to disruption of ATG7 interaction and promotion of ATG8-like proteins lipidation. Forms an 800-kDa complex composed of ATG12-ATG5 and ATG16L2. Interacts with DHX58/RIG-1, IFIH1/MDA5 and MAVS/IPS-1 in monomeric form as well as in ATG12-ATG5 conjugate. The interaction with MAVS is further enhanced upon vesicular stomatitis virus (VSV) infection. Interacts with ATG3; this interaction is essential for phosphatidylethanolamine (PE)-conjugated ATG8-like proteins formation. Interacts with ATG7. Interacts with ATG10. The ATG12-ATG5 conjugate interacts with RAB33A; this interaction is bridged by ATG16L1 and promotes ATG12-ATG5-ATG16L1 complex recruitment to phagophores. Interacts with TECPR1. Interacts with SH3BGRL. The ATG12-ATG5 conjugate interacts with PDCD6IP (via the BRO1 domain); this interaction is bridged by ATG12 and promotes multiple PDCD6IP-mediated functions such as endolysosomal trafficking, macroautophagy and exosome biogenesis. Post-translationally, acetylated by EP300. As to expression, ubiquitous.

Its subcellular location is the cytoplasm. It localises to the preautophagosomal structure membrane. Ubiquitin-like protein involved in autophagy vesicles formation. Conjugation with ATG5 through a ubiquitin-like conjugating system involving also ATG7 as an E1-like activating enzyme and ATG10 as an E2-like conjugating enzyme, is essential for its function. The ATG12-ATG5 conjugate acts as an E3-like enzyme which is required for lipidation of ATG8 family proteins and their association to the vesicle membranes. As part of the ATG8 conjugation system with ATG5 and ATG16L1, required for recruitment of LRRK2 to stressed lysosomes and induction of LRRK2 kinase activity in response to lysosomal stress. Its function is as follows. (Microbial infection) May act as a proviral factor. In association with ATG5, negatively regulates the innate antiviral immune response by impairing the type I IFN production pathway upon vesicular stomatitis virus (VSV) infection. The polypeptide is Ubiquitin-like protein ATG12 (Mus musculus (Mouse)).